The following is a 411-amino-acid chain: UDP-N-acetylmuramoylalanine--D-glutamate ligase (411 aa).

92 to 98 (GTDGKST) provides a ligand contact to ATP.

Belongs to the MurCDEF family.

It is found in the cytoplasm. It catalyses the reaction UDP-N-acetyl-alpha-D-muramoyl-L-alanine + D-glutamate + ATP = UDP-N-acetyl-alpha-D-muramoyl-L-alanyl-D-glutamate + ADP + phosphate + H(+). Its pathway is cell wall biogenesis; peptidoglycan biosynthesis. Functionally, cell wall formation. Catalyzes the addition of glutamate to the nucleotide precursor UDP-N-acetylmuramoyl-L-alanine (UMA). This chain is UDP-N-acetylmuramoylalanine--D-glutamate ligase, found in Hydrogenobaculum sp. (strain Y04AAS1).